Here is a 328-residue protein sequence, read N- to C-terminus: P2Y purinoceptor 3 (328 aa).

The Extracellular segment spans residues 1–22; it reads MSMANFTGGRNSCTFHEEFKQV. The N-linked (GlcNAc...) asparagine glycan is linked to Asn5. A helical membrane pass occupies residues 23-43; that stretch reads LLPLVYSVVFLLGLPLNAVVI. The Cytoplasmic portion of the chain corresponds to 44-57; it reads GQIWLARKALTRTT. Residues 58 to 78 form a helical membrane-spanning segment; sequence IYMLNLAMADLLYVCSLPLLI. The Extracellular portion of the chain corresponds to 79–96; it reads YNYTQKDYWPFGDFTCKF. A disulfide bond links Cys94 and Cys172. The helical transmembrane segment at 97–117 threads the bilayer; the sequence is VRFQFYTNLHGSILFLTCISV. The Cytoplasmic portion of the chain corresponds to 118–139; sequence QRYMGICHPLASWHKKKGKKLT. A helical transmembrane segment spans residues 140–160; the sequence is WLVCAAVWFIVIAQCLPTFVF. At 161 to 189 the chain is on the extracellular side; sequence ASTGTQRNRTVCYDLSPPDRSTSYFPYGI. A helical transmembrane segment spans residues 190-210; it reads TLTITGFLLPFAAILACYCSM. Over 211 to 231 the chain is Cytoplasmic; it reads ARILCQKDELIGLAVHKKKDK. Residues 232 to 252 traverse the membrane as a helical segment; it reads AVRMIIIVVIVFSISFFPFHL. Topologically, residues 253–275 are extracellular; that stretch reads TKTIYLIVRSSASLPCPTLQAFA. Residues 276 to 298 form a helical membrane-spanning segment; that stretch reads IAYKCTRPFASMNSVLDPILFYF. The Cytoplasmic portion of the chain corresponds to 299 to 323; that stretch reads TQRKFRESTRYLLDKMSSKWRQDHC.

It belongs to the G-protein coupled receptor 1 family.

The protein resides in the cell membrane. Functionally, receptor for extracellular ADP &gt; UTP &gt; ATP = UDP. The activity of this receptor is mediated by G proteins which activate a phosphatidylinositol-calcium second messenger system. This is P2Y purinoceptor 3 (P2RY3) from Gallus gallus (Chicken).